The sequence spans 803 residues: Exocyst complex component 6 (803 aa).

It belongs to the SEC15 family. The exocyst complex is composed of EXOC1, EXOC2, EXOC3, EXOC4, EXOC5, EXOC6, EXOC7 and EXOC8. Interacts with CNTRL. Interacts with RAB11A in a GTP-dependent manner.

The protein localises to the cytoplasm. It is found in the perinuclear region. Its subcellular location is the cell projection. It localises to the growth cone. The protein resides in the midbody. The protein localises to the midbody ring. Functionally, component of the exocyst complex involved in the docking of exocytic vesicles with fusion sites on the plasma membrane. Together with RAB11A, RAB3IP, RAB8A, PARD3, PRKCI, ANXA2, CDC42 and DNMBP promotes transcytosis of PODXL to the apical membrane initiation sites (AMIS), apical surface formation and lumenogenesis. The chain is Exocyst complex component 6 (EXOC6) from Canis lupus familiaris (Dog).